A 406-amino-acid chain; its full sequence is MAVNLTEKTAEQLPDIDGIALYTAQAGVKKPGHTDLTLIAVAAGSTVGAVFTTNRFCAAPVHIAKSHLFDEDGVRALVINTGNANAGTGAQGRIDALAVCAAAARQIGCKPNQVMPFSTGVILEPLPADKIIAALPKMQPAFWNEAARAIMTTDTVPKAASREGKVGDQHTVRATGIAKGSGMIHPNMATMLGFIATDAKVSQPVLQLMTQEIADETFNTITVDGDTSTNDSFVIIATGKNSQSEIDNIADPRYAQLKELLCSLALELAQAIVRDGEGATKFITVRVENAKTCDEARQAAYAAARSPLVKTAFFASDPNLGKRLAAIGYADVADLDTDLVEMYLDDILVAEHGGRAASYTEAQGQAVMSKDEITVRIKLHRGQAAATVYTCDLSHGYVSINADYRS.

The substrate site is built by threonine 152, lysine 179, threonine 190, glutamate 277, asparagine 401, and serine 406. Catalysis depends on threonine 190, which acts as the Nucleophile.

Belongs to the ArgJ family. In terms of assembly, heterotetramer of two alpha and two beta chains.

The protein resides in the cytoplasm. It catalyses the reaction N(2)-acetyl-L-ornithine + L-glutamate = N-acetyl-L-glutamate + L-ornithine. The enzyme catalyses L-glutamate + acetyl-CoA = N-acetyl-L-glutamate + CoA + H(+). The protein operates within amino-acid biosynthesis; L-arginine biosynthesis; L-ornithine and N-acetyl-L-glutamate from L-glutamate and N(2)-acetyl-L-ornithine (cyclic): step 1/1. Its pathway is amino-acid biosynthesis; L-arginine biosynthesis; N(2)-acetyl-L-ornithine from L-glutamate: step 1/4. Functionally, catalyzes two activities which are involved in the cyclic version of arginine biosynthesis: the synthesis of N-acetylglutamate from glutamate and acetyl-CoA as the acetyl donor, and of ornithine by transacetylation between N(2)-acetylornithine and glutamate. The sequence is that of Arginine biosynthesis bifunctional protein ArgJ from Neisseria gonorrhoeae.